Consider the following 1288-residue polypeptide: VWFA and cache domain-containing protein 1 (1288 aa).

The N-terminal stretch at 1 to 49 (MAREPEEEETVRPAAVVRRCPRCPGWPGAPRPPLWLLCLVACWILGAVA) is a signal peptide. Topologically, residues 50 to 1109 (DADFSILDEA…ITLNMIKSAP (1060 aa)) are extracellular. N-linked (GlcNAc...) asparagine glycosylation occurs at Asn-159. Residues 242–457 (HIVVILDHGA…TTVGRFYTNL (216 aa)) form the VWFA domain. Cache domains lie at 467–546 (FSLP…SEPP) and 786–867 (LTGP…HPTL). Residues 1110 to 1130 (VGPVAGGIMGCIMVLVLAVYA) form a helical membrane-spanning segment. At 1131 to 1288 (YRHQIHRRSH…VTVHTVDAEC (158 aa)) the chain is on the cytoplasmic side. Disordered regions lie at residues 1157–1176 (NLEN…RGII) and 1187–1237 (ERHV…VDVG). Over residues 1159-1174 (ENDRDERDDDSHEDRG) the composition is skewed to basic and acidic residues. The segment covering 1210–1229 (GYSTMSPQEDSENPPCNNDP) has biased composition (polar residues).

This sequence belongs to the calcium channel subunit alpha-2/delta family.

The protein localises to the membrane. Its function is as follows. May regulate voltage-dependent calcium channels. The protein is VWFA and cache domain-containing protein 1 (Cachd1) of Mus musculus (Mouse).